The chain runs to 77 residues: Sec-independent protein translocase protein TatA (77 aa).

The chain crosses the membrane as a helical span at residues M1–G21. Composition is skewed to basic and acidic residues over residues E47–A56 and T65–A77. Residues E47–A77 are disordered.

This sequence belongs to the TatA/E family. In terms of assembly, the Tat system comprises two distinct complexes: a TatABC complex, containing multiple copies of TatA, TatB and TatC subunits, and a separate TatA complex, containing only TatA subunits. Substrates initially bind to the TatABC complex, which probably triggers association of the separate TatA complex to form the active translocon.

The protein resides in the cell inner membrane. Functionally, part of the twin-arginine translocation (Tat) system that transports large folded proteins containing a characteristic twin-arginine motif in their signal peptide across membranes. TatA could form the protein-conducting channel of the Tat system. This Shewanella amazonensis (strain ATCC BAA-1098 / SB2B) protein is Sec-independent protein translocase protein TatA.